Consider the following 144-residue polypeptide: DNA polymerase III subunit chi (144 aa).

This sequence belongs to the DNA polymerase III chi/HolC chain family. In terms of assembly, DNA polymerase III contains a core (composed of alpha, epsilon and theta chains) that associates with a tau subunit. This core dimerizes to form the POLIII' complex. PolIII' associates with the gamma complex (composed of gamma, delta, delta', psi and chi chains) and with the beta chain to form the complete DNA polymerase III complex. Interacts directly with the psi subunit (holD). The only subunit of the DNA polymerase III holoenzyme known to interact with single-stranded DNA binding protein (SSB), interacts directly with DNA helicase YoaA.

It catalyses the reaction DNA(n) + a 2'-deoxyribonucleoside 5'-triphosphate = DNA(n+1) + diphosphate. Its function is as follows. Part of the beta sliding clamp loading complex, which hydrolyzes ATP to load the beta clamp onto primed DNA to form the DNA replication pre-initiation complex. DNA polymerase III is a complex, multichain enzyme responsible for most of the replicative synthesis in bacteria. This DNA polymerase also exhibits 3' to 5' exonuclease activity. This subunit may stabilize YoaA and/or stimulate the helicase activity of YoaA. This is DNA polymerase III subunit chi (holC) from Haemophilus influenzae (strain ATCC 51907 / DSM 11121 / KW20 / Rd).